Consider the following 288-residue polypeptide: Small ribosomal subunit protein uS3 (288 aa).

The region spanning 38-106 (IRRMMSKGLE…QVQLNIIEVK (69 aa)) is the KH type-2 domain. The disordered stretch occupies residues 209–288 (PGRETPAEAP…TQPAETQQEG (80 aa)). Over residues 219-232 (SRPRRERGDRSERP) the composition is skewed to basic and acidic residues. Low complexity predominate over residues 249–264 (AGRAAATTIAQAAETP). Residues 277-288 (AATQPAETQQEG) are compositionally biased toward polar residues.

The protein belongs to the universal ribosomal protein uS3 family. In terms of assembly, part of the 30S ribosomal subunit. Forms a tight complex with proteins S10 and S14.

Functionally, binds the lower part of the 30S subunit head. Binds mRNA in the 70S ribosome, positioning it for translation. This is Small ribosomal subunit protein uS3 from Salinispora arenicola (strain CNS-205).